A 607-amino-acid polypeptide reads, in one-letter code: V-type proton ATPase catalytic subunit A (607 aa).

ATP is bound at residue G246–T253.

Belongs to the ATPase alpha/beta chains family. As to quaternary structure, V-ATPase is a heteromultimeric enzyme composed of a peripheral catalytic V1 complex (components A to H) attached to an integral membrane V0 proton pore complex (components: a, c, c', c'', d, e, f and VOA1).

It is found in the vacuole membrane. It catalyses the reaction ATP + H2O + 4 H(+)(in) = ADP + phosphate + 5 H(+)(out). Catalytic subunit of the V1 complex of vacuolar(H+)-ATPase (V-ATPase), a multisubunit enzyme composed of a peripheral complex (V1) that hydrolyzes ATP and a membrane integral complex (V0) that translocates protons. V-ATPase is responsible for acidifying and maintaining the pH of intracellular compartments. The sequence is that of V-type proton ATPase catalytic subunit A (vma-1) from Neurospora crassa (strain ATCC 24698 / 74-OR23-1A / CBS 708.71 / DSM 1257 / FGSC 987).